The primary structure comprises 573 residues: Sulfite reductase [NADPH] hemoprotein beta-component (573 aa).

Cys-438, Cys-444, Cys-483, and Cys-487 together coordinate [4Fe-4S] cluster. Cys-487 contributes to the siroheme binding site.

This sequence belongs to the nitrite and sulfite reductase 4Fe-4S domain family. As to quaternary structure, alpha(8)-beta(8). The alpha component is a flavoprotein, the beta component is a hemoprotein. Siroheme is required as a cofactor. Requires [4Fe-4S] cluster as cofactor.

The enzyme catalyses hydrogen sulfide + 3 NADP(+) + 3 H2O = sulfite + 3 NADPH + 4 H(+). It participates in sulfur metabolism; hydrogen sulfide biosynthesis; hydrogen sulfide from sulfite (NADPH route): step 1/1. Functionally, component of the sulfite reductase complex that catalyzes the 6-electron reduction of sulfite to sulfide. This is one of several activities required for the biosynthesis of L-cysteine from sulfate. This Nitrosomonas eutropha (strain DSM 101675 / C91 / Nm57) protein is Sulfite reductase [NADPH] hemoprotein beta-component.